The sequence spans 193 residues: MENKNEFIIDILKECSALLEGHFLLSSGRHSDKYCQCAKLLQYPDKAEKVLKVVVDKIKDLDFDMVVGPAMGGIIVAYELGRQLKKPNIFTERQEGVMTLRRGFEIQKGKKVIITEDVVTTGKSSLEVAKLIEKLGGEVVAICSIVDRRDDNIELPYNLYSSVKIDVKSYEEKDCPLCKEGLEYIKPGSRNIK.

Glu-116–Ser-124 provides a ligand contact to 5-phospho-alpha-D-ribose 1-diphosphate. Orotate is bound by residues Thr-120 and Arg-148.

This sequence belongs to the purine/pyrimidine phosphoribosyltransferase family. PyrE subfamily. As to quaternary structure, homodimer. It depends on Mg(2+) as a cofactor.

It catalyses the reaction orotidine 5'-phosphate + diphosphate = orotate + 5-phospho-alpha-D-ribose 1-diphosphate. It functions in the pathway pyrimidine metabolism; UMP biosynthesis via de novo pathway; UMP from orotate: step 1/2. Catalyzes the transfer of a ribosyl phosphate group from 5-phosphoribose 1-diphosphate to orotate, leading to the formation of orotidine monophosphate (OMP). The polypeptide is Orotate phosphoribosyltransferase (Clostridium tetani (strain Massachusetts / E88)).